The chain runs to 325 residues: Large ribosomal subunit protein uL4m (325 aa).

The interval 113 to 158 is disordered; that stretch reads ASTKTRYEVHGSHKKMSPQKGTGNARRGTRQSPLMKGGGKTFGPKP.

It belongs to the universal ribosomal protein uL4 family. Component of the mitochondrial large ribosomal subunit (mt-LSU). Mature N.crassa 74S mitochondrial ribosomes consist of a small (37S) and a large (54S) subunit. The 37S small subunit contains a 16S ribosomal RNA (16S mt-rRNA) and 32 different proteins. The 54S large subunit contains a 23S rRNA (23S mt-rRNA) and 42 different proteins.

It localises to the mitochondrion. In terms of biological role, component of the mitochondrial ribosome (mitoribosome), a dedicated translation machinery responsible for the synthesis of mitochondrial genome-encoded proteins, including at least some of the essential transmembrane subunits of the mitochondrial respiratory chain. The mitoribosomes are attached to the mitochondrial inner membrane and translation products are cotranslationally integrated into the membrane. The protein is Large ribosomal subunit protein uL4m (yml6) of Neurospora crassa (strain ATCC 24698 / 74-OR23-1A / CBS 708.71 / DSM 1257 / FGSC 987).